A 352-amino-acid polypeptide reads, in one-letter code: Selenide, water dikinase (352 aa).

The active site involves C23. ATP contacts are provided by residues K26 and S54–D56. D57 provides a ligand contact to Mg(2+). Residues D74, D97, and G145 to S147 each bind ATP. Residue D97 participates in Mg(2+) binding. D233 is a Mg(2+) binding site.

It belongs to the selenophosphate synthase 1 family. Class I subfamily. Homodimer. Mg(2+) serves as cofactor.

It carries out the reaction hydrogenselenide + ATP + H2O = selenophosphate + AMP + phosphate + 2 H(+). Functionally, synthesizes selenophosphate from selenide and ATP. This chain is Selenide, water dikinase, found in Shewanella sp. (strain MR-7).